The primary structure comprises 411 residues: Serine hydroxymethyltransferase (411 aa).

Residues Leu-119 and 123–125 (GHL) each bind (6S)-5,6,7,8-tetrahydrofolate. Lys-228 carries the N6-(pyridoxal phosphate)lysine modification. 351–353 (SPF) provides a ligand contact to (6S)-5,6,7,8-tetrahydrofolate.

It belongs to the SHMT family. Homodimer. Pyridoxal 5'-phosphate serves as cofactor.

It localises to the cytoplasm. The enzyme catalyses (6R)-5,10-methylene-5,6,7,8-tetrahydrofolate + glycine + H2O = (6S)-5,6,7,8-tetrahydrofolate + L-serine. The protein operates within one-carbon metabolism; tetrahydrofolate interconversion. It participates in amino-acid biosynthesis; glycine biosynthesis; glycine from L-serine: step 1/1. Catalyzes the reversible interconversion of serine and glycine with tetrahydrofolate (THF) serving as the one-carbon carrier. This reaction serves as the major source of one-carbon groups required for the biosynthesis of purines, thymidylate, methionine, and other important biomolecules. Also exhibits THF-independent aldolase activity toward beta-hydroxyamino acids, producing glycine and aldehydes, via a retro-aldol mechanism. The chain is Serine hydroxymethyltransferase from Clostridium beijerinckii (strain ATCC 51743 / NCIMB 8052) (Clostridium acetobutylicum).